The primary structure comprises 120 residues: Synaptobrevin (120 aa).

The tract at residues 1–38 (MSAPPSGPAPDAQGGAPGQPTGPPGAPPNTTSNRRLQQ) is disordered. Residues 1–98 (MSAPPSGPAP…KRKYWWKNCK (98 aa)) lie on the Cytoplasmic side of the membrane. Polar residues predominate over residues 29 to 38 (NTTSNRRLQQ). One can recognise a v-SNARE coiled-coil homology domain in the interval 35 to 95 (RLQQTQAQVE…AKLKRKYWWK (61 aa)). Residues 99–118 (MMIMLGGIGAIIVIVIIIYF) form a helical; Anchor for type IV membrane protein membrane-spanning segment. At 119-120 (FT) the chain is on the vesicular side.

It belongs to the synaptobrevin family. In terms of tissue distribution, nervous system specific.

The protein localises to the cytoplasmic vesicle. The protein resides in the secretory vesicle. Its subcellular location is the synaptic vesicle membrane. It localises to the synapse. It is found in the synaptosome. In terms of biological role, this protein may play a role in packaging, transport or release of neurotransmitters. This is Synaptobrevin from Tetronarce californica (Pacific electric ray).